We begin with the raw amino-acid sequence, 182 residues long: Inner membrane assembly complex subunit 17 (182 aa).

A mitochondrion-targeting transit peptide spans 1-45 (MLKRRSNALITLSRTKLFPITTVAYYHRRLLNQQRRAVSTSPKKE). Residues 46–107 (IKSLEDLANL…EIPVKRFIRP (62 aa)) lie on the Mitochondrial matrix side of the membrane. A helical membrane pass occupies residues 108-127 (LWMFILMGSSVYLLLHFSWW). A coiled-coil region spans residues 128-158 (KLEHEERESQLKKEVEILEHQLNELIVQDKT). Residues 128-182 (KLEHEERESQLKKEVEILEHQLNELIVQDKTHNTSRGKGSNESTHMKPWYRRWFW) lie on the Mitochondrial intermembrane side of the membrane.

It belongs to the INA17 family. As to quaternary structure, component of the inner membrane assembly (INA) complex, composed of INA17 and INA22. Interacts with a subset of F(1)F(0)-ATP synthase subunits of the F(1)-domain and the peripheral stalk.

It localises to the mitochondrion inner membrane. Functionally, component of the INA complex (INAC) that promotes the biogenesis of mitochondrial F(1)F(0)-ATP synthase. INAC facilitates the assembly of the peripheral stalk and promotes the assembly of the catalytic F(1)-domain with the membrane-embedded F(0)-domain. The sequence is that of Inner membrane assembly complex subunit 17 from Saccharomyces cerevisiae (strain RM11-1a) (Baker's yeast).